The chain runs to 979 residues: Translation initiation factor IF-2 (979 aa).

The disordered stretch occupies residues V68 to A386. Basic and acidic residues-rich tracts occupy residues Q102–E179, E217–R229, and T260–G273. Residues R317–S326 show a composition bias toward polar residues. The segment covering D347 to L356 has biased composition (basic and acidic residues). Positions A478–E646 constitute a tr-type G domain. Residues G487 to T494 are G1. G487–T494 is a GTP binding site. A G2 region spans residues G512 to H516. Positions D534 to G537 are G3. Residues D534 to H538 and N588 to D591 each bind GTP. The segment at N588–D591 is G4. Residues S624 to K626 form a G5 region.

This sequence belongs to the TRAFAC class translation factor GTPase superfamily. Classic translation factor GTPase family. IF-2 subfamily.

It is found in the cytoplasm. In terms of biological role, one of the essential components for the initiation of protein synthesis. Protects formylmethionyl-tRNA from spontaneous hydrolysis and promotes its binding to the 30S ribosomal subunits. Also involved in the hydrolysis of GTP during the formation of the 70S ribosomal complex. The sequence is that of Translation initiation factor IF-2 from Porphyromonas gingivalis (strain ATCC BAA-308 / W83).